Reading from the N-terminus, the 304-residue chain is UDP-3-O-acyl-N-acetylglucosamine deacetylase (304 aa).

Zn(2+)-binding residues include His78, His237, and Asp241. His264 (proton donor) is an active-site residue.

This sequence belongs to the LpxC family. It depends on Zn(2+) as a cofactor.

The catalysed reaction is a UDP-3-O-[(3R)-3-hydroxyacyl]-N-acetyl-alpha-D-glucosamine + H2O = a UDP-3-O-[(3R)-3-hydroxyacyl]-alpha-D-glucosamine + acetate. The protein operates within glycolipid biosynthesis; lipid IV(A) biosynthesis; lipid IV(A) from (3R)-3-hydroxytetradecanoyl-[acyl-carrier-protein] and UDP-N-acetyl-alpha-D-glucosamine: step 2/6. In terms of biological role, catalyzes the hydrolysis of UDP-3-O-myristoyl-N-acetylglucosamine to form UDP-3-O-myristoylglucosamine and acetate, the committed step in lipid A biosynthesis. This Legionella pneumophila (strain Lens) protein is UDP-3-O-acyl-N-acetylglucosamine deacetylase.